The chain runs to 339 residues: Ketol-acid reductoisomerase (NADP(+)) (339 aa).

The KARI N-terminal Rossmann domain maps to 1–182 (MRVYYDRDAD…GGGRAGIIET (182 aa)). NADP(+) is bound by residues 24–27 (YGSQ), arginine 48, serine 51, serine 53, and 83–86 (DELQ). Histidine 108 is an active-site residue. Residue glycine 134 coordinates NADP(+). The KARI C-terminal knotted domain maps to 183–328 (TFKEECETDL…ARLRDMMPWI (146 aa)). Residues aspartate 191, glutamate 195, glutamate 227, and glutamate 231 each contribute to the Mg(2+) site. Serine 252 is a binding site for substrate.

This sequence belongs to the ketol-acid reductoisomerase family. It depends on Mg(2+) as a cofactor.

The enzyme catalyses (2R)-2,3-dihydroxy-3-methylbutanoate + NADP(+) = (2S)-2-acetolactate + NADPH + H(+). The catalysed reaction is (2R,3R)-2,3-dihydroxy-3-methylpentanoate + NADP(+) = (S)-2-ethyl-2-hydroxy-3-oxobutanoate + NADPH + H(+). It functions in the pathway amino-acid biosynthesis; L-isoleucine biosynthesis; L-isoleucine from 2-oxobutanoate: step 2/4. It participates in amino-acid biosynthesis; L-valine biosynthesis; L-valine from pyruvate: step 2/4. Involved in the biosynthesis of branched-chain amino acids (BCAA). Catalyzes an alkyl-migration followed by a ketol-acid reduction of (S)-2-acetolactate (S2AL) to yield (R)-2,3-dihydroxy-isovalerate. In the isomerase reaction, S2AL is rearranged via a Mg-dependent methyl migration to produce 3-hydroxy-3-methyl-2-ketobutyrate (HMKB). In the reductase reaction, this 2-ketoacid undergoes a metal-dependent reduction by NADPH to yield (R)-2,3-dihydroxy-isovalerate. The sequence is that of Ketol-acid reductoisomerase (NADP(+)) from Bradyrhizobium sp. (strain ORS 278).